Here is a 148-residue protein sequence, read N- to C-terminus: Protein SOB FIVE-LIKE 1 (148 aa).

Residues 1-10 (MESPRNHGGS) are compositionally biased toward basic and acidic residues. Disordered stretches follow at residues 1-20 (MESPRNHGGSEEEEYSSCES) and 33-148 (NDQS…SKTK). Positions 20-25 (SGWTMY) match the SOFL-A motif. Residues 54–76 (DGYENDDGDTSDDGGDEESDDSM) are compositionally biased toward acidic residues. The SOFL-B motif lies at 75-84 (SMASDASSGP). Over residues 91 to 101 (HINKHAARKNG) the composition is skewed to basic residues. The segment covering 111 to 128 (QHTEKTISNEGEKSDLKA) has biased composition (basic and acidic residues).

This sequence belongs to the SOFL plant protein family. As to expression, predominantly expressed in the vascular tissues of seedlings, developing leaves, flowers and siliques, but barely detectable in roots and stems.

It localises to the cytoplasm. Its subcellular location is the nucleus. Functionally, involved in cytokinin-mediated development. Together with SOFL2, triggers the endogenous content of specific bioactive cytokinins derived from the biosynthetic intermediates trans-zeatin riboside monophosphate (tZRMP) and N(6)-(Delta(2)-isopentenyl)adenosine monophosphate (iPRMP) such as N-glucosides trans-zeatin 7-glucoside (tZ7G), cis-zeatin 7-glucoside (cZ7G) and N(6)-(Delta(2)-isopentenyl)adenine 7-glucoside (iP7G). The protein is Protein SOB FIVE-LIKE 1 of Arabidopsis thaliana (Mouse-ear cress).